Consider the following 116-residue polypeptide: Tyrosine-protein phosphatase 20 (116 aa).

The 116-residue stretch at 1 to 116 (WMMIVEQKCR…EIGGDAPMVV (116 aa)) folds into the Tyrosine-protein phosphatase domain. Aspartate 84 contributes to the substrate binding site.

It belongs to the protein-tyrosine phosphatase family.

It catalyses the reaction O-phospho-L-tyrosyl-[protein] + H2O = L-tyrosyl-[protein] + phosphate. In Styela plicata (Wrinkled sea squirt), this protein is Tyrosine-protein phosphatase 20 (STY-20).